The sequence spans 369 residues: Flagellar P-ring protein (369 aa).

Residues 1 to 22 (MFNARRLIAATLLMSCAFGAHA) form the signal peptide.

It belongs to the FlgI family. The basal body constitutes a major portion of the flagellar organelle and consists of four rings (L,P,S, and M) mounted on a central rod.

The protein localises to the periplasm. It is found in the bacterial flagellum basal body. Its function is as follows. Assembles around the rod to form the L-ring and probably protects the motor/basal body from shearing forces during rotation. The sequence is that of Flagellar P-ring protein from Pseudomonas entomophila (strain L48).